The following is a 186-amino-acid chain: MNDYINGLLHKIDDKYLYIELNNSGYRFLYLKTDLKDLKLNQNNQVYVAINVIDNVFKYYGFKNQLIRDLFELLININTIGEKTAFLILENYNYNELIDIFKNGRTDKILQLKGIGNYTARLIINSVQKELFNNKISDKKNKVITSLEKLGYKTKDIYKIIINIDEDMNIEDLTKYVLEQLSYLHN.

The domain I stretch occupies residues 1-63; that stretch reads MNDYINGLLH…DNVFKYYGFK (63 aa). Residues 64–137 are domain II; sequence NQLIRDLFEL…QKELFNNKIS (74 aa). Position 137 (Ser137) is a region of interest, flexible linker. The segment at 137 to 186 is domain III; sequence SDKKNKVITSLEKLGYKTKDIYKIIINIDEDMNIEDLTKYVLEQLSYLHN.

Belongs to the RuvA family. As to quaternary structure, homotetramer. Forms an RuvA(8)-RuvB(12)-Holliday junction (HJ) complex. HJ DNA is sandwiched between 2 RuvA tetramers; dsDNA enters through RuvA and exits via RuvB. An RuvB hexamer assembles on each DNA strand where it exits the tetramer. Each RuvB hexamer is contacted by two RuvA subunits (via domain III) on 2 adjacent RuvB subunits; this complex drives branch migration. In the full resolvosome a probable DNA-RuvA(4)-RuvB(12)-RuvC(2) complex forms which resolves the HJ.

Its subcellular location is the cytoplasm. In terms of biological role, the RuvA-RuvB-RuvC complex processes Holliday junction (HJ) DNA during genetic recombination and DNA repair, while the RuvA-RuvB complex plays an important role in the rescue of blocked DNA replication forks via replication fork reversal (RFR). RuvA specifically binds to HJ cruciform DNA, conferring on it an open structure. The RuvB hexamer acts as an ATP-dependent pump, pulling dsDNA into and through the RuvAB complex. HJ branch migration allows RuvC to scan DNA until it finds its consensus sequence, where it cleaves and resolves the cruciform DNA. The protein is Holliday junction branch migration complex subunit RuvA of Mycoplasma mycoides subsp. mycoides SC (strain CCUG 32753 / NCTC 10114 / PG1).